A 1399-amino-acid chain; its full sequence is DNA-directed RNA polymerase subunit beta' (1399 aa).

4 residues coordinate Zn(2+): Cys-71, Cys-73, Cys-86, and Cys-89. Mg(2+) is bound by residues Asp-462, Asp-464, and Asp-466. Cys-810, Cys-884, Cys-891, and Cys-894 together coordinate Zn(2+). The segment at 1379–1399 is disordered; that stretch reads KQAAIVPSQPEPQPLALPPAE. Residues 1387-1399 show a composition bias toward pro residues; it reads QPEPQPLALPPAE.

The protein belongs to the RNA polymerase beta' chain family. As to quaternary structure, the RNAP catalytic core consists of 2 alpha, 1 beta, 1 beta' and 1 omega subunit. When a sigma factor is associated with the core the holoenzyme is formed, which can initiate transcription. Requires Mg(2+) as cofactor. Zn(2+) is required as a cofactor.

The enzyme catalyses RNA(n) + a ribonucleoside 5'-triphosphate = RNA(n+1) + diphosphate. Its function is as follows. DNA-dependent RNA polymerase catalyzes the transcription of DNA into RNA using the four ribonucleoside triphosphates as substrates. The polypeptide is DNA-directed RNA polymerase subunit beta' (Bradyrhizobium sp. (strain ORS 278)).